The sequence spans 227 residues: Ion-translocating oxidoreductase complex subunit E (227 aa).

5 helical membrane-spanning segments follow: residues 34-56 (AINAIGLGMTTTLVLTITNTIIS), 68-88 (IPIYMMIISSVVTSIEMLLHA), 91-111 (FNLYQSLGIFIPLIVTNCIIV), 127-147 (FFDGIFIGLGSMFAMFAVGSI), and 181-201 (TIILAVFPPGGFLILGFLIAI).

This sequence belongs to the NqrDE/RnfAE family. The complex is composed of six subunits: RnfA, RnfB, RnfC, RnfD, RnfE and RnfG.

It is found in the cell inner membrane. Part of a membrane-bound complex that couples electron transfer with translocation of ions across the membrane. The protein is Ion-translocating oxidoreductase complex subunit E of Buchnera aphidicola subsp. Acyrthosiphon pisum (strain 5A).